The sequence spans 273 residues: Formamidopyrimidine-DNA glycosylase (273 aa).

The active-site Schiff-base intermediate with DNA is proline 2. Glutamate 3 acts as the Proton donor in catalysis. The active-site Proton donor; for beta-elimination activity is the lysine 58. Positions 92, 111, and 153 each coordinate DNA. The FPG-type zinc-finger motif lies at 238 to 272 (MVYARDGQECLSCSSSIIKTKHSGRSTFYCKSCQK). Arginine 262 serves as the catalytic Proton donor; for delta-elimination activity.

This sequence belongs to the FPG family. In terms of assembly, monomer. Zn(2+) serves as cofactor.

It catalyses the reaction Hydrolysis of DNA containing ring-opened 7-methylguanine residues, releasing 2,6-diamino-4-hydroxy-5-(N-methyl)formamidopyrimidine.. The catalysed reaction is 2'-deoxyribonucleotide-(2'-deoxyribose 5'-phosphate)-2'-deoxyribonucleotide-DNA = a 3'-end 2'-deoxyribonucleotide-(2,3-dehydro-2,3-deoxyribose 5'-phosphate)-DNA + a 5'-end 5'-phospho-2'-deoxyribonucleoside-DNA + H(+). Its function is as follows. Involved in base excision repair of DNA damaged by oxidation or by mutagenic agents. Acts as a DNA glycosylase that recognizes and removes damaged bases. Has a preference for oxidized purines, such as 7,8-dihydro-8-oxoguanine (8-oxoG). Has AP (apurinic/apyrimidinic) lyase activity and introduces nicks in the DNA strand. Cleaves the DNA backbone by beta-delta elimination to generate a single-strand break at the site of the removed base with both 3'- and 5'-phosphates. In Rickettsia bellii (strain OSU 85-389), this protein is Formamidopyrimidine-DNA glycosylase.